Reading from the N-terminus, the 459-residue chain is Protein king tubby (459 aa).

Positions 114–205 (HELEDEESSP…SNGAGGESEG (92 aa)) are disordered. The segment covering 123–155 (PVTVIEQQQTAPHSANSTHSQRPSTTRQPSFND) has biased composition (polar residues). Phosphoserine is present on S152.

This sequence belongs to the TUB family.

It localises to the cytoplasm. It is found in the nucleus. The protein localises to the cell projection. The protein resides in the cilium membrane. Its subcellular location is the rhabdomere. This Drosophila persimilis (Fruit fly) protein is Protein king tubby.